Consider the following 183-residue polypeptide: Ly6/PLAUR domain-containing protein 6B (183 aa).

The first 39 residues, M1–A39, serve as a signal peptide directing secretion. The region spanning F60–A151 is the UPAR/Ly6 domain. The interval F60–A154 is sufficient for inhibiting alpha-7 nAChR currents. Disulfide bonds link C62–C90, C65–C74, C83–C109, C115–C134, C120–C131, and C135–C140. The GPI-anchor amidated serine moiety is linked to residue S164. Residues S165–L183 constitute a propeptide, removed in mature form.

The protein localises to the cell membrane. In terms of biological role, likely acts as a modulator of nicotinic acetylcholine receptors (nAChRs) activity. In vitro acts on nAChRs in a subtype- and stoichiometry-dependent manner. Modulates specifically alpha-3(3):beta-4(2) nAChRs by enhancing the sensitivity to ACh, decreasing ACh-induced maximal current response and increasing the rate of desensitization to ACh; has no effect on alpha-7 homomeric nAChRs; modulates alpha-3(2):alpha-5:beta-4(2) nAChRs in the context of CHRNA5/alpha-5 variant Asn-398 but not its wild-type sequence. However, according to another report in vitro it can weakly inhibits alpha-7 nAChRs. This Homo sapiens (Human) protein is Ly6/PLAUR domain-containing protein 6B (LYPD6B).